The following is a 73-amino-acid chain: uncharacterized protein (73 aa).

The interval 48 to 73 (AKEPEKKTPSMEAKATSLSPNKASAS) is disordered. The segment covering 63–73 (TSLSPNKASAS) has biased composition (polar residues).

This is an uncharacterized protein from Saccharomyces cerevisiae (strain ATCC 204508 / S288c) (Baker's yeast).